A 161-amino-acid chain; its full sequence is Nucleotide-binding protein mma_0840 (161 aa).

Belongs to the YajQ family.

Functionally, nucleotide-binding protein. In Janthinobacterium sp. (strain Marseille) (Minibacterium massiliensis), this protein is Nucleotide-binding protein mma_0840.